The sequence spans 118 residues: Large ribosomal subunit protein uL22 (118 aa).

This sequence belongs to the universal ribosomal protein uL22 family. In terms of assembly, part of the 50S ribosomal subunit.

Functionally, this protein binds specifically to 23S rRNA; its binding is stimulated by other ribosomal proteins, e.g. L4, L17, and L20. It is important during the early stages of 50S assembly. It makes multiple contacts with different domains of the 23S rRNA in the assembled 50S subunit and ribosome. The globular domain of the protein is located near the polypeptide exit tunnel on the outside of the subunit, while an extended beta-hairpin is found that lines the wall of the exit tunnel in the center of the 70S ribosome. This is Large ribosomal subunit protein uL22 from Thermomicrobium roseum (strain ATCC 27502 / DSM 5159 / P-2).